A 249-amino-acid polypeptide reads, in one-letter code: 2,3-bisphosphoglycerate-dependent phosphoglycerate mutase (249 aa).

Substrate-binding positions include 10 to 17 (RHGESEWN), 23 to 24 (TG), arginine 62, 89 to 92 (ERHY), lysine 100, 116 to 117 (RR), and 185 to 186 (GN). Histidine 11 acts as the Tele-phosphohistidine intermediate in catalysis. Glutamate 89 acts as the Proton donor/acceptor in catalysis.

The protein belongs to the phosphoglycerate mutase family. BPG-dependent PGAM subfamily. As to quaternary structure, homodimer.

The enzyme catalyses (2R)-2-phosphoglycerate = (2R)-3-phosphoglycerate. It participates in carbohydrate degradation; glycolysis; pyruvate from D-glyceraldehyde 3-phosphate: step 3/5. In terms of biological role, catalyzes the interconversion of 2-phosphoglycerate and 3-phosphoglycerate. This chain is 2,3-bisphosphoglycerate-dependent phosphoglycerate mutase, found in Hamiltonella defensa subsp. Acyrthosiphon pisum (strain 5AT).